A 198-amino-acid chain; its full sequence is ATP-dependent Clp protease proteolytic subunit (198 aa).

The active-site Nucleophile is Ser101. His126 is an active-site residue.

Belongs to the peptidase S14 family. Component of the chloroplastic Clp protease core complex.

It is found in the plastid. It localises to the chloroplast stroma. The catalysed reaction is Hydrolysis of proteins to small peptides in the presence of ATP and magnesium. alpha-casein is the usual test substrate. In the absence of ATP, only oligopeptides shorter than five residues are hydrolyzed (such as succinyl-Leu-Tyr-|-NHMec, and Leu-Tyr-Leu-|-Tyr-Trp, in which cleavage of the -Tyr-|-Leu- and -Tyr-|-Trp bonds also occurs).. Its function is as follows. Cleaves peptides in various proteins in a process that requires ATP hydrolysis. Has a chymotrypsin-like activity. Plays a major role in the degradation of misfolded proteins. This is ATP-dependent Clp protease proteolytic subunit from Solanum bulbocastanum (Wild potato).